A 155-amino-acid chain; its full sequence is 2-C-methyl-D-erythritol 2,4-cyclodiphosphate synthase (155 aa).

Residues aspartate 8 and histidine 10 each coordinate a divalent metal cation. Residues 8-10 (DVH) and 34-35 (HS) each bind 4-CDP-2-C-methyl-D-erythritol 2-phosphate. Histidine 42 serves as a coordination point for a divalent metal cation. 4-CDP-2-C-methyl-D-erythritol 2-phosphate contacts are provided by residues 56-58 (DIG), 61-65 (FPDSD), 100-106 (AQKPKML), 132-135 (TTEE), phenylalanine 139, and lysine 142.

This sequence belongs to the IspF family. Homotrimer. The cofactor is a divalent metal cation.

The catalysed reaction is 4-CDP-2-C-methyl-D-erythritol 2-phosphate = 2-C-methyl-D-erythritol 2,4-cyclic diphosphate + CMP. The protein operates within isoprenoid biosynthesis; isopentenyl diphosphate biosynthesis via DXP pathway; isopentenyl diphosphate from 1-deoxy-D-xylulose 5-phosphate: step 4/6. Its function is as follows. Involved in the biosynthesis of isopentenyl diphosphate (IPP) and dimethylallyl diphosphate (DMAPP), two major building blocks of isoprenoid compounds. Catalyzes the conversion of 4-diphosphocytidyl-2-C-methyl-D-erythritol 2-phosphate (CDP-ME2P) to 2-C-methyl-D-erythritol 2,4-cyclodiphosphate (ME-CPP) with a corresponding release of cytidine 5-monophosphate (CMP). This Clostridium botulinum (strain Okra / Type B1) protein is 2-C-methyl-D-erythritol 2,4-cyclodiphosphate synthase.